Consider the following 382-residue polypeptide: Succinyl-diaminopimelate desuccinylase (382 aa).

H73 contributes to the Zn(2+) binding site. D75 is an active-site residue. D106 is a Zn(2+) binding site. The Proton acceptor role is filled by E140. Residues E141, E169, and H355 each coordinate Zn(2+).

This sequence belongs to the peptidase M20A family. DapE subfamily. In terms of assembly, homodimer. Zn(2+) serves as cofactor. The cofactor is Co(2+).

It catalyses the reaction N-succinyl-(2S,6S)-2,6-diaminopimelate + H2O = (2S,6S)-2,6-diaminopimelate + succinate. It functions in the pathway amino-acid biosynthesis; L-lysine biosynthesis via DAP pathway; LL-2,6-diaminopimelate from (S)-tetrahydrodipicolinate (succinylase route): step 3/3. Catalyzes the hydrolysis of N-succinyl-L,L-diaminopimelic acid (SDAP), forming succinate and LL-2,6-diaminopimelate (DAP), an intermediate involved in the bacterial biosynthesis of lysine and meso-diaminopimelic acid, an essential component of bacterial cell walls. This chain is Succinyl-diaminopimelate desuccinylase, found in Cellvibrio japonicus (strain Ueda107) (Pseudomonas fluorescens subsp. cellulosa).